The primary structure comprises 223 residues: Deoxyribose-phosphate aldolase (223 aa).

The Proton donor/acceptor role is filled by Asp-89. Catalysis depends on Lys-152, which acts as the Schiff-base intermediate with acetaldehyde. Lys-181 (proton donor/acceptor) is an active-site residue.

It belongs to the DeoC/FbaB aldolase family. DeoC type 1 subfamily.

It is found in the cytoplasm. It carries out the reaction 2-deoxy-D-ribose 5-phosphate = D-glyceraldehyde 3-phosphate + acetaldehyde. The protein operates within carbohydrate degradation; 2-deoxy-D-ribose 1-phosphate degradation; D-glyceraldehyde 3-phosphate and acetaldehyde from 2-deoxy-alpha-D-ribose 1-phosphate: step 2/2. Catalyzes a reversible aldol reaction between acetaldehyde and D-glyceraldehyde 3-phosphate to generate 2-deoxy-D-ribose 5-phosphate. The protein is Deoxyribose-phosphate aldolase of Bacillus cereus (strain ZK / E33L).